We begin with the raw amino-acid sequence, 255 residues long: Proliferating cell nuclear antigen 2 (255 aa).

Residues 61–80 (HCDRNVSLGLDLKSLGKVLK) mediate DNA binding.

Belongs to the PCNA family. In terms of assembly, homotrimer. Interacts with the catalytic subunits of two DNA polymerase complexes: PolD1 in the delta complex and PolE1/DNApol-epsilon255 in the epsilon complex.

It is found in the nucleus. Its subcellular location is the chromosome. The protein resides in the cytoplasm. Likely to be an auxiliary protein of DNA polymerase delta complex and is probably involved in the control of DNA replication and repair by increasing the polymerase's processibility. May function independently of PCNA during DNA repair. This Drosophila melanogaster (Fruit fly) protein is Proliferating cell nuclear antigen 2.